A 485-amino-acid chain; its full sequence is Subtilisin-like protease 1 (485 aa).

A signal peptide spans 1–19 (MGIFRFISISLAAVSAANA). Positions 20–116 (GHILSMGHAK…VEPDTTITIH (97 aa)) are excised as a propeptide. The Inhibitor I9 domain occupies 34 to 116 (SYIVVMKDGT…VEPDTTITIH (83 aa)). The Peptidase S8 domain occupies 126-400 (SWGLARISSQ…NILINNGDAK (275 aa)). Active-site charge relay system residues include Asp158 and His190. N-linked (GlcNAc...) asparagine glycosylation occurs at Asn251. Catalysis depends on Ser345, which acts as the Charge relay system. A compositionally biased stretch (polar residues) spans 377 to 394 (GTSSVTNPGPGTRTNILI). Residues 377–462 (GTSSVTNPGP…HTPFPNDDFN (86 aa)) are disordered. Residues 409 to 418 (PSQPPKPSQP) are compositionally biased toward pro residues. Low complexity predominate over residues 419-428 (SKPQQPSEPQ). A compositionally biased stretch (pro residues) spans 433–455 (PQEPAPGQPAPAPAPVPQHPHTP).

It belongs to the peptidase S8 family.

The protein resides in the secreted. In terms of biological role, secreted subtilisin-like serine protease with keratinolytic activity that contributes to pathogenicity. The sequence is that of Subtilisin-like protease 1 (SUB1) from Arthroderma otae (strain ATCC MYA-4605 / CBS 113480) (Microsporum canis).